Consider the following 275-residue polypeptide: Large ribosomal subunit protein uL2 (275 aa).

The interval 225–275 (MNPVDHPHGGGEGRSPIGRPPVTPWGKPALGTRTRNKKKASSKLIVKRRTK) is disordered. The span at 258-275 (TRNKKKASSKLIVKRRTK) shows a compositional bias: basic residues.

It belongs to the universal ribosomal protein uL2 family. In terms of assembly, part of the 50S ribosomal subunit. Forms a bridge to the 30S subunit in the 70S ribosome.

In terms of biological role, one of the primary rRNA binding proteins. Required for association of the 30S and 50S subunits to form the 70S ribosome, for tRNA binding and peptide bond formation. It has been suggested to have peptidyltransferase activity; this is somewhat controversial. Makes several contacts with the 16S rRNA in the 70S ribosome. The chain is Large ribosomal subunit protein uL2 from Desulforudis audaxviator (strain MP104C).